We begin with the raw amino-acid sequence, 115 residues long: NADH-ubiquinone oxidoreductase chain 3 (115 aa).

The next 3 helical transmembrane spans lie at 3–23, 55–75, and 84–104; these read FVLALTINTLLALLLMILTFW, FFLVAITFLLFDLEIALLLPL, and LPLMTTSSLMLIIILALGLTY.

The protein belongs to the complex I subunit 3 family. In terms of assembly, core subunit of respiratory chain NADH dehydrogenase (Complex I) which is composed of 45 different subunits. Interacts with TMEM186. Interacts with TMEM242.

The protein resides in the mitochondrion inner membrane. It carries out the reaction a ubiquinone + NADH + 5 H(+)(in) = a ubiquinol + NAD(+) + 4 H(+)(out). Its function is as follows. Core subunit of the mitochondrial membrane respiratory chain NADH dehydrogenase (Complex I) which catalyzes electron transfer from NADH through the respiratory chain, using ubiquinone as an electron acceptor. Essential for the catalytic activity of complex I. This chain is NADH-ubiquinone oxidoreductase chain 3, found in Pongo pygmaeus (Bornean orangutan).